The sequence spans 89 residues: Sec translocon accessory complex subunit YrbF (89 aa).

The chain crosses the membrane as a helical span at residues 4 to 24 (GTLGTLVPIILMFAVLYFLLI).

This sequence belongs to the YajC family. In terms of assembly, part of the SecDF-YidC-YajC translocase complex. The SecDF-YidC-YajC translocase forms a supercomplex with SecYEG, called the holo-translocon (HTL).

The protein resides in the cell membrane. In terms of biological role, the SecYEG-SecDF-YajC-YidC holo-translocon (HTL) protein secretase/insertase is a supercomplex required for protein secretion, insertion of proteins into membranes, and assembly of membrane protein complexes. While the SecYEG complex is essential for assembly of a number of proteins and complexes, the SecDF-YajC-YidC subcomplex facilitates these functions. This is Sec translocon accessory complex subunit YrbF (yrbF) from Bacillus subtilis (strain 168).